Here is a 411-residue protein sequence, read N- to C-terminus: Secretion apparatus protein BsaZ (411 aa).

Transmembrane regions (helical) follow at residues 28-48, 80-100, 137-157, and 175-195; these read IVAL…VDLT, IAAP…LVQS, ALLY…LYHA, and IVLT…VLIL. Residues 341-411 are disordered; the sequence is AANRGGPPPE…APARTGDQNA (71 aa). Positions 370–404 are enriched in low complexity; it reads DACADNAFPDDAPPGAAAPNAGSPDSPAPDGGAPA.

Belongs to the type III secretion exporter family.

The protein localises to the cell membrane. Its function is as follows. Part of the bsa type III secretion system, is involved in the intracellular replication of invading bacteria inside the host cell. Probably necessary for the lysis of the vacuole membrane and escape into the host cell cytoplasm. This Burkholderia pseudomallei (strain 1106a) protein is Secretion apparatus protein BsaZ (bsaZ).